A 576-amino-acid polypeptide reads, in one-letter code: CDPK-related kinase 1 (576 aa).

The segment at 1 to 39 (MGICHGKPVEQQSKSLPVSGETNEAPTNSQPPAKSSGFP) is disordered. Gly2 carries N-myristoyl glycine lipidation. Polar residues predominate over residues 10–33 (EQQSKSLPVSGETNEAPTNSQPPA). In terms of domain architecture, Protein kinase spans 123 to 385 (YEIDGEVGRG…AAQALCHPWL (263 aa)). ATP-binding positions include 129–137 (VGRGHFGYT) and Lys155. Asp251 serves as the catalytic Proton acceptor. At Ser291 the chain carries Phosphoserine. Ser333 is subject to Phosphoserine; by CPK1 and CPK34. Positions 390–420 (ELKIPSDMIIYKLVKVYIMSTSLRKSALAAL) are autoinhibitory domain. A calmodulin binding (CaMBD) region spans residues 409–429 (STSLRKSALAALAKTLTVPQL). 4 consecutive EF-hand domains span residues 427-463 (PQLAYLREQFTLLGPSKNGYISMQNYKTAILKSSTDA), 464-499 (MKDSRVFDFVHMISCLQYKKLDFEEFCASALSVYQL), 500-539 (EAMETWEQHARRAYELFEKDGNRPIMIEELASELGLGPSV), and 542-571 (HVVLQDWIRHSDGKLSFLGFVRLLHGVSSR). Residues Ser442, Asn444, Tyr446, Lys483, Glu488, Asp519, Asn521, Glu528, Asp553, and Lys555 each contribute to the Ca(2+) site. The residue at position 557 (Ser557) is a Phosphoserine.

Belongs to the protein kinase superfamily. Ser/Thr protein kinase family. CDPK subfamily. In terms of assembly, binds calmodulin (CaM) in a calcium-dependent manner. Interacts with HSFA1A. Post-translationally, autophosphorylated.

The protein resides in the membrane. The enzyme catalyses L-seryl-[protein] + ATP = O-phospho-L-seryl-[protein] + ADP + H(+). The catalysed reaction is L-threonyl-[protein] + ATP = O-phospho-L-threonyl-[protein] + ADP + H(+). Activated by calcium and calmodulin. Autophosphorylation may play an important role in the regulation of the kinase activity. May play a role in signal transduction pathways that involve calcium as a second messenger. Serine/threonine kinase that phosphorylates histone H3. Confers thermotolerance; involved in the heat-shock-mediated calmodulin-dependent signal transduction leading to the activation of heat-shock transcription factors (HSFs); phosphorylates HSFA1A. The sequence is that of CDPK-related kinase 1 (CRK1) from Arabidopsis thaliana (Mouse-ear cress).